Reading from the N-terminus, the 700-residue chain is Phenylalanine ammonia-lyase hkm12 (700 aa).

The Proton donor/acceptor role is filled by Tyr82. Residues Ala183–Gly185 constitute a cross-link (5-imidazolinone (Ala-Gly)). Ser184 is modified (2,3-didehydroalanine (Ser)). (E)-cinnamate contacts are provided by Asn242, Gln325, Arg331, Asn361, Lys432, Glu460, and Asn463.

It belongs to the PAL/histidase family. Post-translationally, contains an active site 4-methylidene-imidazol-5-one (MIO), which is formed autocatalytically by cyclization and dehydration of residues Ala-Ser-Gly.

It carries out the reaction L-phenylalanine = (E)-cinnamate + NH4(+). It participates in secondary metabolite biosynthesis. In terms of biological role, phenylalanine ammonia-lyase; part of the gene cluster that mediates the biosynthesis of hancockiamides, an unusual new family of N-cinnamoylated piperazines. The NRPS hkm10 and the NmrA-like reductase hkm9 are proposed to convert two molecules of L-Phe to the intermediary piperazine called xenocockiamide A. Xenocockiamide A is then converted to hancockiamide D via a series of hydroxylations and O-methylations. The tyrosinase hkm6 may catalyze an aromatic hydroxylation, then the 2-oxoglutarate-dependent Fe(II) dioxygenase hkm4 and the FAD-dependent phenol hydroxylase hkm7 may catalyze consecutive hydroxylations to install 2 more hydroxy groups, and the methyltransferase hkm8 probably catalyzes two methylations using 2 molecules of S-adenosyl-L-methionine (SAM). The NRPS hkm11 activates and transfers trans-cinnamate supplied by the PAL hkm12 to hancockiamide D and produces hancockiamide A. NRPS Hkm11 has the flexibility to tolerate the bulky hancockiamide G as a substrate and the absence of the acetyl-transferase hkm3 opens up the opportunity for hkm11 to introduce a second N-cinnamoyl moiety. The cytochrome P450 monooxygenase hkm5 catalyzes the methylenedioxy bridge formation, converting hancockiamide A into hancockiamide G. Hkm5 can also convert hancockiamide B into hancockiamide C, and hancockiamide D into hancockiamide H. The N-acetyltransferase hkm3 finally transfers an acetyl group to 1-N of piperazine, converting hancockiamide A into hancockiamide B and hancockiamide G into hancockiamide C. The polypeptide is Phenylalanine ammonia-lyase hkm12 (Aspergillus hancockii).